A 388-amino-acid polypeptide reads, in one-letter code: Succinate--CoA ligase [ADP-forming] subunit beta (388 aa).

The 236-residue stretch at 9 to 244 folds into the ATP-grasp domain; that stretch reads KQLFKEFGLP…PSQDDAREAE (236 aa). Residues Lys46, 53-55, Glu99, Thr102, and Glu107 contribute to the ATP site; that span reads GRG. Positions 199 and 213 each coordinate Mg(2+). Substrate is bound by residues Asn264 and 321 to 323; that span reads GIV.

This sequence belongs to the succinate/malate CoA ligase beta subunit family. As to quaternary structure, heterotetramer of two alpha and two beta subunits. Mg(2+) is required as a cofactor.

It carries out the reaction succinate + ATP + CoA = succinyl-CoA + ADP + phosphate. It catalyses the reaction GTP + succinate + CoA = succinyl-CoA + GDP + phosphate. Its pathway is carbohydrate metabolism; tricarboxylic acid cycle; succinate from succinyl-CoA (ligase route): step 1/1. Its function is as follows. Succinyl-CoA synthetase functions in the citric acid cycle (TCA), coupling the hydrolysis of succinyl-CoA to the synthesis of either ATP or GTP and thus represents the only step of substrate-level phosphorylation in the TCA. The beta subunit provides nucleotide specificity of the enzyme and binds the substrate succinate, while the binding sites for coenzyme A and phosphate are found in the alpha subunit. This is Succinate--CoA ligase [ADP-forming] subunit beta from Idiomarina loihiensis (strain ATCC BAA-735 / DSM 15497 / L2-TR).